Consider the following 357-residue polypeptide: RNA-binding protein 4B (357 aa).

RRM domains lie at 2-72 (VKLF…ASKN) and 78-148 (TKLH…LSTS). A CCHC-type zinc finger spans residues 160 to 177 (SGCYRCGKEGHWSKECPV). Positions 196-357 (AVRTPYTMGY…YVDRTRYSAF (162 aa)) are interaction with TNPO3.

In terms of assembly, interacts with TNPO3, which may mediate nuclear import of the protein. In terms of tissue distribution, expressed in the suprachiasmatic nucleus (SCN) (at protein level). Expressed in the suprachiasmatic nucleus (SCN).

The protein localises to the nucleus. It is found in the nucleolus. Functionally, required for the translational activation of PER1 mRNA in response to circadian clock. Binds directly to the 3'-UTR of the PER1 mRNA. The protein is RNA-binding protein 4B (Rbm4b) of Mus musculus (Mouse).